We begin with the raw amino-acid sequence, 262 residues long: Abhydrolase domain-containing protein ACTT2-1 (262 aa).

The short motif at 260-262 is the Peroxisomal targeting signal type 1 element; it reads SKL.

Belongs to the AB hydrolase superfamily. AKT2 hydrolase family.

The protein resides in the peroxisome. It functions in the pathway mycotoxin biosynthesis. Its function is as follows. Abhydrolase domain-containing protein; part of the gene clusters that mediate the biosynthesis of the host-selective toxins (HSTs) ACT-toxins responsible for brown spot of tangerine disease by the tangerine pathotype which affects tangerines and mandarins. ACT-toxins consist of three moieties, 9,10-epoxy-8-hydroxy-9-methyl-decatrienoic acid (EDA), valine and a polyketide. ACT-toxin I is toxic to both citrus and pear; toxin II the 5''-deoxy derivative of ACT-toxin I, is highly toxic to pear and slightly toxic to citrus. On cellular level, ACT-toxins affect plasma membrane of susceptible cells and cause a sudden increase in loss of K(+) after a few minutes of toxin treatment. The acyl-CoA ligase ACTT1, the hydrolase ACTT2, the enoyl-CoA hydratases ACTT3 and ACTT6, and the acyl-CoA synthetase ACTT5 are all involved in the biosynthesis of the AK-, AF- and ACT-toxin common 9,10-epoxy-8-hydroxy-9-methyl-decatrienoic acid (EDA) structural moiety. The exact role of each enzyme, and of additional enzymes identified within the AF-toxin clusters have still to be determined. On the other hand, ACTTS1 to ACTTS4 are specific to the tangerine pathotype. The function of ACTTS3 is to elongate the polyketide chain portion of ACT-toxin that is unique to this toxin. The enoyl-reductase ACTTS2 might complement the missing enoyl-reductase (ER) domain in ACTTS3 in the synthesis of the polyketide portion of ACT-toxin. The roles of the nonribosomal peptide synthetases-related proteins ACTTS1 and ACTTS4 have also still not been elucidated. This chain is Abhydrolase domain-containing protein ACTT2-1, found in Alternaria alternata (Alternaria rot fungus).